We begin with the raw amino-acid sequence, 99 residues long: Accessory protein p12I (99 aa).

Residues 4 to 11 carry the SH3-binding motif; sequence RLLSPLSP. Residues 12–32 traverse the membrane as a helical segment; sequence LALTALLLFLLSPGEVSGLLL. An SH3-binding motif is present at residues 33 to 38; sequence RPLPAP. A helical membrane pass occupies residues 48 to 68; sequence ILSNLLFLLFLPLFFSLPLLL. Short sequence motifs (SH3-binding) lie at residues 70 to 77 and 88 to 93; these read PSLPITMR and RAPSQP.

It belongs to the HTLV-1 accessory protein p12I family. In terms of assembly, p12I is a homodimer. Interacts with human CANX, CALR, ATP6V0C, IL2RB, IL2RG. Binds to MHC-I heavy chains HLA-A2, HLA-B7 and HLA-Cw4. In terms of processing, ubiquitinated; a fraction of P12I is degraded via the ubiquitin system.

Its subcellular location is the host endoplasmic reticulum membrane. It localises to the host Golgi apparatus. The protein resides in the host cis-Golgi network membrane. P12I is a modulator of T-lymphocyte proliferation and immune function and may contribute to establish a persistent infection. Binds and down-modulates cell surface expression of interleukin-2 receptors IL2RB and IL2RG. Also down-modulates cell surface MHC-I molecules by binding to free immature MHC-I heavy chains in the ER and targeting them to the proteasome for degradation. Binding to IL2RB mediates recruitment of JAK1 and JAK3. As a result of this interaction, p12I increases DNA-binding and transcriptional activity of STAT5. The protein is Accessory protein p12I of Homo sapiens (Human).